We begin with the raw amino-acid sequence, 197 residues long: Transposon Tn10 TetC protein (197 aa).

The HTH tetR-type domain occupies 12-72 (KSTYQSLVNS…ACYKQQLIMI (61 aa)). A DNA-binding region (H-T-H motif) is located at residues 35–54 (SIDEISGKALVTKGAFYHHF).

This Escherichia coli protein is Transposon Tn10 TetC protein (tetC).